The following is a 146-amino-acid chain: Anti-sigma F factor (146 aa).

Belongs to the anti-sigma-factor family.

The enzyme catalyses L-seryl-[protein] + ATP = O-phospho-L-seryl-[protein] + ADP + H(+). The catalysed reaction is L-threonyl-[protein] + ATP = O-phospho-L-threonyl-[protein] + ADP + H(+). In terms of biological role, binds to sigma F and blocks its ability to form an RNA polymerase holoenzyme (E-sigma F). Phosphorylates SpoIIAA on a serine residue. This phosphorylation may enable SpoIIAA to act as an anti-anti-sigma factor that counteracts SpoIIAB and thus releases sigma F from inhibition. This Bacillus licheniformis protein is Anti-sigma F factor.